The primary structure comprises 330 residues: Pyridoxal 5'-phosphate synthase subunit PdxS (330 aa).

Asp-23 is a D-ribose 5-phosphate binding site. The Schiff-base intermediate with D-ribose 5-phosphate role is filled by Lys-80. Gly-152 provides a ligand contact to D-ribose 5-phosphate. Residue Arg-164 participates in D-glyceraldehyde 3-phosphate binding. D-ribose 5-phosphate contacts are provided by residues Gly-250 and 271-272; that span reads GS.

It belongs to the PdxS/SNZ family. As to quaternary structure, in the presence of PdxT, forms a dodecamer of heterodimers.

The catalysed reaction is aldehydo-D-ribose 5-phosphate + D-glyceraldehyde 3-phosphate + L-glutamine = pyridoxal 5'-phosphate + L-glutamate + phosphate + 3 H2O + H(+). Its pathway is cofactor biosynthesis; pyridoxal 5'-phosphate biosynthesis. Its function is as follows. Catalyzes the formation of pyridoxal 5'-phosphate from ribose 5-phosphate (RBP), glyceraldehyde 3-phosphate (G3P) and ammonia. The ammonia is provided by the PdxT subunit. Can also use ribulose 5-phosphate and dihydroxyacetone phosphate as substrates, resulting from enzyme-catalyzed isomerization of RBP and G3P, respectively. This is Pyridoxal 5'-phosphate synthase subunit PdxS from Methanocaldococcus jannaschii (strain ATCC 43067 / DSM 2661 / JAL-1 / JCM 10045 / NBRC 100440) (Methanococcus jannaschii).